A 635-amino-acid polypeptide reads, in one-letter code: Threonine--tRNA ligase (635 aa).

The region spanning methionine 1–threonine 58 is the TGS domain. Residues aspartate 237–proline 528 are catalytic. Zn(2+) is bound by residues cysteine 328, histidine 379, and histidine 505.

The protein belongs to the class-II aminoacyl-tRNA synthetase family. Homodimer. The cofactor is Zn(2+).

It localises to the cytoplasm. It carries out the reaction tRNA(Thr) + L-threonine + ATP = L-threonyl-tRNA(Thr) + AMP + diphosphate + H(+). In terms of biological role, catalyzes the attachment of threonine to tRNA(Thr) in a two-step reaction: L-threonine is first activated by ATP to form Thr-AMP and then transferred to the acceptor end of tRNA(Thr). Also edits incorrectly charged L-seryl-tRNA(Thr). The protein is Threonine--tRNA ligase of Chlamydia pneumoniae (Chlamydophila pneumoniae).